A 172-amino-acid chain; its full sequence is Envelope protein UL45 (172 aa).

At 1 to 27 (MPLRASEHAYRPLGPGTPPMRARLPAA) the chain is on the intravirion side. The helical; Signal-anchor for type II membrane protein transmembrane segment at 28 to 48 (AWVGVGTIIGGVVIIAALVLV) threads the bilayer. Residues 49-172 (PSRASWALSP…TSTRNALGLP (124 aa)) are Virion surface-facing.

Belongs to the herpesviridae HHV-1 UL45 family.

It localises to the virion membrane. Its function is as follows. Important virulence factor of HSV neurotropism. Seems to be required for glycoprotein B-induced fusion. Dispensable for growth in vitro. This chain is Envelope protein UL45, found in Human herpesvirus 1 (strain 17) (HHV-1).